The sequence spans 432 residues: Bifunctional IPC transferase and DIPP synthase (432 aa).

Residues 3–225 (PERAVILAAG…RARRMLVRTA (223 aa)) are mobA-like NTP transferase. CTP is bound by residues 9-11 (LAA), Lys-22, and Glu-113. A Mg(2+)-binding site is contributed by Glu-113. The interval 226–426 (VKGTGDGFVS…LTLYFVVKKV (201 aa)) is CDP-alcohol phosphatidyltransferases. A run of 3 helical transmembrane segments spans residues 264–284 (FLLG…AGIL), 337–356 (IWYF…SYST), and 385–405 (VFLT…ALFL).

In the N-terminal section; belongs to the MobA family. This sequence in the C-terminal section; belongs to the CDP-alcohol phosphatidyltransferase class-I family. Mg(2+) is required as a cofactor.

It is found in the membrane. The enzyme catalyses 1D-myo-inositol 3-phosphate + CTP + H(+) = CDP-1L-myo-inositol + diphosphate. It carries out the reaction CDP-1L-myo-inositol + 1D-myo-inositol 3-phosphate = bis(1L-myo-inositol) 3,1'-phosphate 1-phosphate + CMP + H(+). Involved in biosynthesis of di-myo-inositol phosphate (DIP), a widespread organic solute in microorganisms adapted to hot environments. Catalyzes the condensation of CTP and L-myo-inositol-1-phosphate into CDP-L-myo-inositol, as well as the biosynthesis of di-myo-inositol-1,3'-phosphate-1'-phosphate (DIPP) from CDP-L-myo-inositol and L-myo-inositol-1-phosphate. In Thermococcus kodakarensis (strain ATCC BAA-918 / JCM 12380 / KOD1) (Pyrococcus kodakaraensis (strain KOD1)), this protein is Bifunctional IPC transferase and DIPP synthase.